The chain runs to 201 residues: Translation initiation factor IF-3 (201 aa).

This sequence belongs to the IF-3 family. Monomer.

Its subcellular location is the cytoplasm. Its function is as follows. IF-3 binds to the 30S ribosomal subunit and shifts the equilibrium between 70S ribosomes and their 50S and 30S subunits in favor of the free subunits, thus enhancing the availability of 30S subunits on which protein synthesis initiation begins. The polypeptide is Translation initiation factor IF-3 (Mycoplasma pneumoniae (strain ATCC 29342 / M129 / Subtype 1) (Mycoplasmoides pneumoniae)).